A 412-amino-acid polypeptide reads, in one-letter code: Early growth response protein 2b (412 aa).

Residues 269 to 299 (YTPQNLPLRPILRPRKYPNRPSKTPVHERPY) are disordered. 3 consecutive C2H2-type zinc fingers follow at residues 299-323 (YPCPAEGCDRRFSRSDELTRHIRIH), 329-351 (FQCRICMRNFSRSDHLTTHIRTH), and 357-379 (FACDFCGRKFARSDERKRHTKIH). The tract at residues 371 to 412 (ERKRHTKIHLRQKERKSSSSSTGVSSSERGVATSICSSSSNQ) is disordered. Residues 374–384 (RHTKIHLRQKE) are compositionally biased toward basic residues. Low complexity predominate over residues 388 to 401 (SSSSTGVSSSERGV).

The protein belongs to the EGR C2H2-type zinc-finger protein family.

Its subcellular location is the nucleus. Its function is as follows. Sequence-specific DNA-binding transcription factor. Binds to two specific DNA sites located in the promoter region of HOXA4. The chain is Early growth response protein 2b (egr2b) from Danio rerio (Zebrafish).